A 253-amino-acid polypeptide reads, in one-letter code: 5'-nucleotidase SurE (253 aa).

Positions 8, 9, 40, and 92 each coordinate a divalent metal cation.

It belongs to the SurE nucleotidase family. It depends on a divalent metal cation as a cofactor.

It localises to the cytoplasm. The catalysed reaction is a ribonucleoside 5'-phosphate + H2O = a ribonucleoside + phosphate. Nucleotidase that shows phosphatase activity on nucleoside 5'-monophosphates. In Hyphomonas neptunium (strain ATCC 15444), this protein is 5'-nucleotidase SurE.